The chain runs to 122 residues: Glycine cleavage system H protein (122 aa).

Residues 22 to 103 form the Lipoyl-binding domain; the sequence is IGIIGISDYA…AFGSWFFKVE (82 aa). Lysine 63 carries the N6-lipoyllysine modification.

Belongs to the GcvH family. In terms of assembly, the glycine cleavage system is composed of four proteins: P, T, L and H. (R)-lipoate serves as cofactor.

The glycine cleavage system catalyzes the degradation of glycine. The H protein shuttles the methylamine group of glycine from the P protein to the T protein. This chain is Glycine cleavage system H protein, found in Treponema denticola (strain ATCC 35405 / DSM 14222 / CIP 103919 / JCM 8153 / KCTC 15104).